A 2054-amino-acid chain; its full sequence is Multiple PDZ domain protein (2054 aa).

The region spanning 3 to 63 (ETIDKNRALQ…SLQQLKDQVN (61 aa)) is the L27 domain. In terms of domain architecture, PDZ 1 spans 138–225 (IFELLKPPCG…TIQLVIARGS (88 aa)). S231 carries the phosphoserine modification. 4 PDZ domains span residues 258 to 338 (TIEL…ARGA), 377 to 463 (DVEL…MRKG), 545 to 626 (VAHV…CRRT), and 692 to 778 (AIEL…VAKP). Residues S782 and S1065 each carry the phosphoserine modification. The 82-residue stretch at 995 to 1076 (TVTIAKGSSS…IGPDIKITYV (82 aa)) folds into the PDZ 6 domain. The disordered stretch occupies residues 1110 to 1129 (PELPEREEGEGEESELQNAA). The 93-residue stretch at 1138–1230 (RVELWREPSK…PVVFMVQSIV (93 aa)) folds into the PDZ 7 domain. Omega-N-methylarginine is present on R1157. Positions 1261 to 1273 (LQLTSDKAPSQSE) are enriched in polar residues. A disordered region spans residues 1261-1312 (LQLTSDKAPSQSESESEKATLCSVPSSSPSVFSEMSSDYAQPSATTVAEDED). Residues 1283-1297 (SVPSSSPSVFSEMSS) show a composition bias toward low complexity. The PDZ 8 domain occupies 1337–1420 (MIELEKGHSG…KVKIIFIRNA (84 aa)). Residues 1433–1454 (AADPLPSTSESPQNKEVEPSIT) form a disordered region. The PDZ 9 domain maps to 1470 to 1551 (HLELPKDQGG…TVKLTVGAEN (82 aa)). The disordered stretch occupies residues 1560 to 1594 (AAVTASGERKDSSQTPAVPAPDLEPIPSTSRSSTP). PDZ domains lie at 1613–1696 (TIEI…YRDE) and 1709–1791 (TVEL…GRIK). The interval 1795-1834 (FHSERRPSQSSQVSESSLSSFSLPRSGIHTSESSESSAKK) is disordered. Residues S1802 and S1808 each carry the phosphoserine modification. Positions 1802 to 1834 (SQSSQVSESSLSSFSLPRSGIHTSESSESSAKK) are enriched in low complexity. 2 PDZ domains span residues 1846–1932 (TVEI…VAGG) and 1971–2054 (TITL…MVLS).

In terms of assembly, interacts with F11R/JAM, CLDN1, NG2, CXADR, CRB1, MPP4 and PALS1, HTR2A, HTR2B, PLEKHA1/TAPP1 and PLEKHA2/TAPP2. Interacts with CXADR. Interacts with HTR2C, CLDN5, DLG4, GRIN1, SYNGAP1, CAMK2A and CAMK2B. Interacts with FAT4 (via cytoplasmic domain). Interacts with DLL1. In terms of tissue distribution, abundant in all cerebral cortical layers, especially the piriform cortex, the pyramidal cells of the CA1-CA3 subfields of the hippocampus, as well as the granular layer of the dentate gyrus. Detected in the internal granular layer and the mitral cell layer of the olfactory bulb; in the medial habenular nucleus; and in amygdaloid, thalamic, hypothalamic, and pontine nuclei. In the cerebellum, found at high levels in the granular layer. Detected in the lateral ventricle. Expression overlaps with 5-HT2C receptor expression in all regions of the brain including the choroid plexus, where 5-HT2C receptors are highly enriched.

It localises to the endomembrane system. The protein resides in the cell junction. It is found in the tight junction. The protein localises to the synapse. Its subcellular location is the apical cell membrane. It localises to the postsynaptic density. The protein resides in the cell projection. It is found in the dendrite. The protein localises to the synaptosome. Its function is as follows. Member of the NMDAR signaling complex that may play a role in control of AMPAR potentiation and synaptic plasticity in excitatory synapses. Promotes clustering of HT2RC at the cell surface. The polypeptide is Multiple PDZ domain protein (Mpdz) (Rattus norvegicus (Rat)).